The chain runs to 309 residues: MRIFFASSESIALEVLKKVADQHNVVGVLTAPDKPSGRGLFLRANDIKVEATNRNITVLDPVVLNSDVVEIVKRLNPDLMLVFSYGKIFRQEFLDIFPMGCINVHPSLLPKYRGPSPIQTAILNGDTVGGITVQKMALEMDSGNILSQSQFEIKSFNTSADIFRYVSLNSFNLVLEALSKLDKGNIGIEQDSRQATYCSFFNKQHRILDFNLSAFEIKNKINACNPWPLARAKLDDDEIIFHRADFIRTNDYSDQAIGKIILFDPSRGILVKTGDGILLLLELQRAGRKVMDYKSFYNGNRDLIGKIFS.

Residue Ser107–Pro110 participates in (6S)-5,6,7,8-tetrahydrofolate binding.

It belongs to the Fmt family.

It carries out the reaction L-methionyl-tRNA(fMet) + (6R)-10-formyltetrahydrofolate = N-formyl-L-methionyl-tRNA(fMet) + (6S)-5,6,7,8-tetrahydrofolate + H(+). Its function is as follows. Attaches a formyl group to the free amino group of methionyl-tRNA(fMet). The formyl group appears to play a dual role in the initiator identity of N-formylmethionyl-tRNA by promoting its recognition by IF2 and preventing the misappropriation of this tRNA by the elongation apparatus. This Borrelia hermsii (strain HS1 / DAH) protein is Methionyl-tRNA formyltransferase.